The primary structure comprises 145 residues: Basic phospholipase A2 beta-bungarotoxin A-AL1 chain (145 aa).

The N-terminal stretch at 1-17 (MLIFLWCGAVCVSLLGA) is a signal peptide. A propeptide spanning residues 18–25 (ANIPPHPL) is cleaved from the precursor. Cystine bridges form between Cys-52–Cys-144, Cys-54–Cys-70, Cys-76–Cys-118, Cys-86–Cys-111, and Cys-104–Cys-116. Residues Tyr-53, Gly-55, and Gly-57 each contribute to the Ca(2+) site. Residue His-73 is part of the active site. Asp-119 is a catalytic residue.

It belongs to the phospholipase A2 family. Group I subfamily. G49 sub-subfamily. In terms of assembly, heterodimer; disulfide-linked. The A chains have phospholipase A2 activity and the B chains show homology with the basic protease inhibitors. It depends on Ca(2+) as a cofactor. Post-translationally, this enzyme lacks one of the seven disulfide bonds found in similar PLA2 proteins. Expressed by the venom gland.

The protein resides in the secreted. It carries out the reaction a 1,2-diacyl-sn-glycero-3-phosphocholine + H2O = a 1-acyl-sn-glycero-3-phosphocholine + a fatty acid + H(+). Snake venom phospholipase A2 (PLA2) that inhibits neuromuscular transmission by blocking acetylcholine release from the nerve termini. PLA2 catalyzes the calcium-dependent hydrolysis of the 2-acyl groups in 3-sn-phosphoglycerides. This Bungarus multicinctus (Many-banded krait) protein is Basic phospholipase A2 beta-bungarotoxin A-AL1 chain.